The sequence spans 138 residues: ATP synthase epsilon chain (138 aa).

Residues 89 to 114 are compositionally biased toward basic and acidic residues; sequence KDTAQQEWNEAQKRLDEASKSGDRQK. Residues 89–117 are disordered; sequence KDTAQQEWNEAQKRLDEASKSGDRQKQIQ.

Belongs to the ATPase epsilon chain family. In terms of assembly, F-type ATPases have 2 components, CF(1) - the catalytic core - and CF(0) - the membrane proton channel. CF(1) has five subunits: alpha(3), beta(3), gamma(1), delta(1), epsilon(1). CF(0) has three main subunits: a, b and c.

The protein localises to the cellular thylakoid membrane. In terms of biological role, produces ATP from ADP in the presence of a proton gradient across the membrane. The sequence is that of ATP synthase epsilon chain from Gloeothece citriformis (strain PCC 7424) (Cyanothece sp. (strain PCC 7424)).